Here is a 434-residue protein sequence, read N- to C-terminus: Enolase (434 aa).

Gln-163 is a binding site for (2R)-2-phosphoglycerate. The active-site Proton donor is Glu-205. Positions 242, 291, and 318 each coordinate Mg(2+). Positions 343, 372, 373, and 394 each coordinate (2R)-2-phosphoglycerate. Lys-343 serves as the catalytic Proton acceptor.

The protein belongs to the enolase family. Requires Mg(2+) as cofactor.

The protein localises to the cytoplasm. The protein resides in the secreted. It localises to the cell surface. It catalyses the reaction (2R)-2-phosphoglycerate = phosphoenolpyruvate + H2O. Its pathway is carbohydrate degradation; glycolysis; pyruvate from D-glyceraldehyde 3-phosphate: step 4/5. Its function is as follows. Catalyzes the reversible conversion of 2-phosphoglycerate (2-PG) into phosphoenolpyruvate (PEP). It is essential for the degradation of carbohydrates via glycolysis. This is Enolase from Streptococcus sanguinis (strain SK36).